A 391-amino-acid polypeptide reads, in one-letter code: uncharacterized protein (391 aa).

One can recognise an HTH arsR-type domain in the interval 235–330 (VFILSRINLL…LYLKNETQKS (96 aa)).

This is an uncharacterized protein from Methanocaldococcus jannaschii (strain ATCC 43067 / DSM 2661 / JAL-1 / JCM 10045 / NBRC 100440) (Methanococcus jannaschii).